The sequence spans 199 residues: ParB-like protein Saci_1498 (199 aa).

It belongs to the ParB family.

Its function is as follows. Probably part of a 4-gene DNA damage response locus in which the upstream ups system, in combination with this downstream locus, functions in homologous recombination to rescue Sulfolobales from DNA-damaging threats. This protein might function in the DNA transfer machinery. This chain is ParB-like protein Saci_1498, found in Sulfolobus acidocaldarius (strain ATCC 33909 / DSM 639 / JCM 8929 / NBRC 15157 / NCIMB 11770).